A 228-amino-acid polypeptide reads, in one-letter code: Translin (228 aa).

Residues 86-90 (RFHEH) are DNA/RNA binding. The interval 177–198 (LDSGFRLLNLKNDSLRKRYDGL) is leucine-zipper. Lys-187 bears the N6-acetyllysine mark. Ser-190 is modified (phosphoserine). The residue at position 199 (Lys-199) is an N6-acetyllysine.

The protein belongs to the translin family. As to quaternary structure, ring-shaped heterooctamer of six TSN and two TSNAX subunits, DNA/RNA binding occurs inside the ring.

It is found in the cytoplasm. Its subcellular location is the nucleus. In terms of biological role, DNA-binding protein that specifically recognizes consensus sequences at the breakpoint junctions in chromosomal translocations, mostly involving immunoglobulin (Ig)/T-cell receptor gene segments. Seems to recognize single-stranded DNA ends generated by staggered breaks occurring at recombination hot spots. Functionally, exhibits both single-stranded and double-stranded endoribonuclease activity. May act as an activator of RNA-induced silencing complex (RISC) by facilitating endonucleolytic cleavage of the siRNA passenger strand. This chain is Translin (Tsn), found in Mus musculus (Mouse).